The sequence spans 261 residues: Cytochrome c oxidase subunit 3 (261 aa).

The Mitochondrial matrix segment spans residues 1 to 15 (MVHQSHAYHMLKPSP). The helical transmembrane segment at 16-34 (WPLTGALSALLMTSGLAMW) threads the bilayer. Topologically, residues 35–40 (FHFHST) are mitochondrial intermembrane. Residues 41–66 (TLLLTGMLTNALTMYQWWRDVVREST) traverse the membrane as a helical segment. The Mitochondrial matrix segment spans residues 67-72 (YQGHHT). The helical transmembrane segment at 73-105 (LPVQKGLRYGMILFITSEVFFFAGFFWAFYHSS) threads the bilayer. The Mitochondrial intermembrane segment spans residues 106 to 128 (LAPTPQLGGHWPPTGITPLNPLE). The chain crosses the membrane as a helical span at residues 129 to 152 (VPLLNTAVLLASGVSITWAHHSLM). Over 153–155 (ENN) the chain is Mitochondrial matrix. The helical transmembrane segment at 156–183 (RTQMIQALLITILLGIYFTLLQASEYIE) threads the bilayer. Residues 184-190 (APFTISD) are Mitochondrial intermembrane-facing. Residues 191–223 (GIYGSTFFMTTGFHGLHVIIGSTFLTVCLSCQL) traverse the membrane as a helical segment. Residues 224-232 (LFHFTSKHH) lie on the Mitochondrial matrix side of the membrane. Residues 233-256 (FGFEAAAWYWHFVDVVWLFLYVSI) form a helical membrane-spanning segment. The Mitochondrial intermembrane segment spans residues 257-261 (YWWGS).

It belongs to the cytochrome c oxidase subunit 3 family. As to quaternary structure, component of the cytochrome c oxidase (complex IV, CIV), a multisubunit enzyme composed of 14 subunits. The complex is composed of a catalytic core of 3 subunits MT-CO1, MT-CO2 and MT-CO3, encoded in the mitochondrial DNA, and 11 supernumerary subunits COX4I, COX5A, COX5B, COX6A, COX6B, COX6C, COX7A, COX7B, COX7C, COX8 and NDUFA4, which are encoded in the nuclear genome. The complex exists as a monomer or a dimer and forms supercomplexes (SCs) in the inner mitochondrial membrane with NADH-ubiquinone oxidoreductase (complex I, CI) and ubiquinol-cytochrome c oxidoreductase (cytochrome b-c1 complex, complex III, CIII), resulting in different assemblies (supercomplex SCI(1)III(2)IV(1) and megacomplex MCI(2)III(2)IV(2)).

It localises to the mitochondrion inner membrane. It carries out the reaction 4 Fe(II)-[cytochrome c] + O2 + 8 H(+)(in) = 4 Fe(III)-[cytochrome c] + 2 H2O + 4 H(+)(out). Component of the cytochrome c oxidase, the last enzyme in the mitochondrial electron transport chain which drives oxidative phosphorylation. The respiratory chain contains 3 multisubunit complexes succinate dehydrogenase (complex II, CII), ubiquinol-cytochrome c oxidoreductase (cytochrome b-c1 complex, complex III, CIII) and cytochrome c oxidase (complex IV, CIV), that cooperate to transfer electrons derived from NADH and succinate to molecular oxygen, creating an electrochemical gradient over the inner membrane that drives transmembrane transport and the ATP synthase. Cytochrome c oxidase is the component of the respiratory chain that catalyzes the reduction of oxygen to water. Electrons originating from reduced cytochrome c in the intermembrane space (IMS) are transferred via the dinuclear copper A center (CU(A)) of subunit 2 and heme A of subunit 1 to the active site in subunit 1, a binuclear center (BNC) formed by heme A3 and copper B (CU(B)). The BNC reduces molecular oxygen to 2 water molecules using 4 electrons from cytochrome c in the IMS and 4 protons from the mitochondrial matrix. The protein is Cytochrome c oxidase subunit 3 (MT-CO3) of Pongo pygmaeus (Bornean orangutan).